An 83-amino-acid chain; its full sequence is Exodeoxyribonuclease 7 small subunit (83 aa).

The protein belongs to the XseB family. As to quaternary structure, heterooligomer composed of large and small subunits.

The protein resides in the cytoplasm. It catalyses the reaction Exonucleolytic cleavage in either 5'- to 3'- or 3'- to 5'-direction to yield nucleoside 5'-phosphates.. In terms of biological role, bidirectionally degrades single-stranded DNA into large acid-insoluble oligonucleotides, which are then degraded further into small acid-soluble oligonucleotides. The chain is Exodeoxyribonuclease 7 small subunit from Heliobacterium modesticaldum (strain ATCC 51547 / Ice1).